The sequence spans 137 residues: Histone H2B (137 aa).

Basic and acidic residues predominate over residues 1–10 (MPPKAADKKP). A disordered region spans residues 1–45 (MPPKAADKKPASKAPATASKAPEKKDAGKKTAASGDKKKRTKTRK). Residues Lys8 and Lys9 each carry the N6-acetyllysine; alternate modification. Glycyl lysine isopeptide (Lys-Gly) (interchain with G-Cter in SUMO); alternate cross-links involve residues Lys8 and Lys9. Ser12 carries the post-translational modification Phosphoserine. At Lys13 the chain carries N6-acetyllysine. An N6-acetyllysine; alternate modification is found at Lys24. A Glycyl lysine isopeptide (Lys-Gly) (interchain with G-Cter in SUMO); alternate cross-link involves residue Lys24. Lys25 participates in a covalent cross-link: Glycyl lysine isopeptide (Lys-Gly) (interchain with G-Cter in SUMO). Lys131 is covalently cross-linked (Glycyl lysine isopeptide (Lys-Gly) (interchain with G-Cter in ubiquitin)).

The protein belongs to the histone H2B family. As to quaternary structure, the nucleosome is a histone octamer containing two molecules each of H2A, H2B, H3 and H4 assembled in one H3-H4 heterotetramer and two H2A-H2B heterodimers. The octamer wraps approximately 147 bp of DNA. Post-translationally, monoubiquitinated by the UBC2-BRE1 complex to form H2BK123ub1. H2BK123ub1 gives a specific tag for epigenetic transcriptional activation and is also prerequisite for H3K4me and H3K79me formation. H2BK123ub1 also modulates the formation of double-strand breaks during meiosis and is a prerequisite for DNA-damage checkpoint activation. In terms of processing, phosphorylated by STE20 to form H2BS10ph during progression through meiotic prophase. May be correlated with chromosome condensation. Acetylated by GCN5 to form H2BK11ac and H2BK16ac. H2BK16ac can also be formed by ESA1. Acetylation of N-terminal lysines and particularly formation of H2BK11acK16ac has a positive effect on transcription. Post-translationally, sumoylation to form H2BK6su or H2BK7su, and probably also H2BK16su or H2BK17su, occurs preferentially near the telomeres and represses gene transcription.

The protein localises to the nucleus. Its subcellular location is the chromosome. Its function is as follows. Core component of nucleosome. Nucleosomes wrap and compact DNA into chromatin, limiting DNA accessibility to the cellular machineries which require DNA as a template. Histones thereby play a central role in transcription regulation, DNA repair, DNA replication and chromosomal stability. DNA accessibility is regulated via a complex set of post-translational modifications of histones, also called histone code, and nucleosome remodeling. This chain is Histone H2B (HTB1), found in Pyricularia oryzae (strain Y34) (Rice blast fungus).